The sequence spans 353 residues: Green-sensitive opsin-2 (353 aa).

Over 1–47 the chain is Extracellular; sequence MAAHEPVFAARRHNEDTTRESAFVYTNANNTRDPFEGPNYHIAPRWV. An N-linked (GlcNAc...) asparagine glycan is attached at N29. The chain crosses the membrane as a helical span at residues 48 to 72; the sequence is YNVSSLWMIFVVIASVFTNGLVIVA. Residues 73-84 are Cytoplasmic-facing; that stretch reads TAKFKKLRHPLN. Residues 85–110 traverse the membrane as a helical segment; it reads WILVNLAIADLGETVLASTISVINQI. Topologically, residues 111–124 are extracellular; the sequence is FGYFILGHPMCVFE. C121 and C198 are oxidised to a cystine. A helical transmembrane segment spans residues 125-144; that stretch reads GWTVSVCGITALWSLTIISW. Residues 145–163 lie on the Cytoplasmic side of the membrane; the sequence is ERWVVVCKPFGNVKFDGKW. Residues 164–187 form a helical membrane-spanning segment; that stretch reads AAGGIIFSWVWAIIWCTPPIFGWS. At 188 to 213 the chain is on the extracellular side; sequence RYWPHGLKTSCGPDVFSGSEDPGVAS. Residues 214–241 traverse the membrane as a helical segment; sequence YMITLMLTCCILPLSIIIICYIFVWSAI. The Cytoplasmic portion of the chain corresponds to 242-263; sequence HQVAQQQKDSESTQKAEKEVSR. Residues 264–287 traverse the membrane as a helical segment; that stretch reads MVVVMILAFIVCWGPYASFATFSA. Over 288–295 the chain is Extracellular; sequence VNPGYAWH. The chain crosses the membrane as a helical span at residues 296–320; it reads PLAAAMPAYFAKSATIYNPIIYVFM. K307 carries the post-translational modification N6-(retinylidene)lysine. The Cytoplasmic segment spans residues 321-353; it reads NRQFRSCIMQLFGKKVEDASEVSGSTTEVSTAS.

This sequence belongs to the G-protein coupled receptor 1 family. Opsin subfamily. The color pigments are found in the cone photoreceptor cells.

The protein resides in the membrane. Its function is as follows. Visual pigments are the light-absorbing molecules that mediate vision. They consist of an apoprotein, opsin, covalently linked to cis-retinal. The sequence is that of Green-sensitive opsin-2 (G101) from Psalidodon fasciatus (Banded astyanax).